The chain runs to 391 residues: MMCGFTSNQSPKKLSSKKLSATNVHLEISPVKCDSPCKGYENVQASYLDTANCTTVTRGADIKDDLPLHNKENLLHRFGDLETHSDEEYSGLQDSGYSSILQNDSPCQDETDNNVSDIQLRETPKNFVQFQKPLHTLSTKNLPALRFEEAMCSTLKKMRKTSKKIDWNAVDDVVCGGNYGLENLIGKNMGLERFDILAELFHRDFKHLLTKILRHLSAMDLINVISVSTTWRKILQKDNSAYNSYKLGCKELCEKKAKVSAHTATRDESLCRVPLASVQKVAASSLCTSKKQSKNRGLSNNRHAEFIEVAQTLKNDQCLKVCVDCSSPAKYDPYLHRATCTRESCKFDFCTLCSCKYHGSKCCQTSKPRSYRVPSEPLPGSKKSKQNLRRL.

In terms of domain architecture, F-box spans 198–245; it reads AELFHRDFKHLLTKILRHLSAMDLINVISVSTTWRKILQKDNSAYNSY. The ZBR-type zinc-finger motif lies at 318–366; sequence CLKVCVDCSSPAKYDPYLHRATCTRESCKFDFCTLCSCKYHGSKCCQTS. The Zn(2+) site is built by Cys322, Cys325, Cys340, Cys345, Cys350, Cys353, His358, and Cys363. Residues 365 to 391 are disordered; it reads TSKPRSYRVPSEPLPGSKKSKQNLRRL. Positions 382 to 391 are enriched in basic residues; sequence KKSKQNLRRL.

In terms of assembly, part of a SCF (SKP1-cullin-F-box) protein ligase complex. Interacts with btrc. Interacts with skp1. Interacts with cdc20. Interacts with pin1; stabilizes fbxo5 by preventing its association with btrc in an isomerization-dependent pathway; this interaction is present during G2 phase and prevents fbxo5 degradation. Interacts with plk1. In terms of processing, proteolysed; proteolysis is induced by both cyclin B-cdk1 and cyclin A-cdk1/2 complex through probable phosphorylation. Proteolysis is inhibited by pin1 during G2.

It is found in the nucleus. It localises to the cytoplasm. Its subcellular location is the cytoskeleton. The protein localises to the spindle. The protein resides in the microtubule organizing center. It is found in the centrosome. The protein operates within protein modification; protein ubiquitination. Functionally, regulates progression through early mitosis by inhibiting the anaphase promoting complex/cyclosome (APC). Binds to the APC activators cdc20 to prevent APC activation. Can also bind directly to the APC to inhibit substrate-binding. Required to arrest unfertilized eggs at metaphase of meiosis II, by preventing their release from metaphase of meiosis II, through inhibition of APC-dependent cyclin B destruction leading to stabilization of cyclin B-cdk1 complex activity. This chain is F-box only protein 5, found in Xenopus tropicalis (Western clawed frog).